The primary structure comprises 232 residues: Phosphatidylserine decarboxylase proenzyme (232 aa).

Residue S190 is the Schiff-base intermediate with substrate; via pyruvic acid of the active site. Position 190 is a pyruvic acid (Ser); by autocatalysis (S190).

It belongs to the phosphatidylserine decarboxylase family. PSD-A subfamily. Heterodimer of a large membrane-associated beta subunit and a small pyruvoyl-containing alpha subunit. It depends on pyruvate as a cofactor. Is synthesized initially as an inactive proenzyme. Formation of the active enzyme involves a self-maturation process in which the active site pyruvoyl group is generated from an internal serine residue via an autocatalytic post-translational modification. Two non-identical subunits are generated from the proenzyme in this reaction, and the pyruvate is formed at the N-terminus of the alpha chain, which is derived from the carboxyl end of the proenzyme. The post-translation cleavage follows an unusual pathway, termed non-hydrolytic serinolysis, in which the side chain hydroxyl group of the serine supplies its oxygen atom to form the C-terminus of the beta chain, while the remainder of the serine residue undergoes an oxidative deamination to produce ammonia and the pyruvoyl prosthetic group on the alpha chain.

Its subcellular location is the cell membrane. It carries out the reaction a 1,2-diacyl-sn-glycero-3-phospho-L-serine + H(+) = a 1,2-diacyl-sn-glycero-3-phosphoethanolamine + CO2. The protein operates within phospholipid metabolism; phosphatidylethanolamine biosynthesis; phosphatidylethanolamine from CDP-diacylglycerol: step 2/2. In terms of biological role, catalyzes the formation of phosphatidylethanolamine (PtdEtn) from phosphatidylserine (PtdSer). The protein is Phosphatidylserine decarboxylase proenzyme of Bradyrhizobium sp. (strain BTAi1 / ATCC BAA-1182).